Here is a 323-residue protein sequence, read N- to C-terminus: tRNA U34 carboxymethyltransferase (323 aa).

Carboxy-S-adenosyl-L-methionine is bound by residues K91, W105, K110, G130, 152-154 (DPT), 181-182 (IE), M196, Y200, and R315.

The protein belongs to the class I-like SAM-binding methyltransferase superfamily. CmoB family. As to quaternary structure, homotetramer.

It carries out the reaction carboxy-S-adenosyl-L-methionine + 5-hydroxyuridine(34) in tRNA = 5-carboxymethoxyuridine(34) in tRNA + S-adenosyl-L-homocysteine + H(+). Its function is as follows. Catalyzes carboxymethyl transfer from carboxy-S-adenosyl-L-methionine (Cx-SAM) to 5-hydroxyuridine (ho5U) to form 5-carboxymethoxyuridine (cmo5U) at position 34 in tRNAs. The protein is tRNA U34 carboxymethyltransferase of Salmonella paratyphi A (strain ATCC 9150 / SARB42).